The sequence spans 104 residues: L-rhamnose mutarotase (104 aa).

Y18 lines the substrate pocket. The Proton donor role is filled by H22. Residues Y41 and W76–W77 contribute to the substrate site.

This sequence belongs to the rhamnose mutarotase family. As to quaternary structure, homodimer.

It is found in the cytoplasm. It carries out the reaction alpha-L-rhamnose = beta-L-rhamnose. The protein operates within carbohydrate metabolism; L-rhamnose metabolism. Involved in the anomeric conversion of L-rhamnose. This is L-rhamnose mutarotase from Mannheimia succiniciproducens (strain KCTC 0769BP / MBEL55E).